Reading from the N-terminus, the 298-residue chain is ATP phosphoribosyltransferase (298 aa).

It belongs to the ATP phosphoribosyltransferase family. Long subfamily. The cofactor is Mg(2+).

Its subcellular location is the cytoplasm. The catalysed reaction is 1-(5-phospho-beta-D-ribosyl)-ATP + diphosphate = 5-phospho-alpha-D-ribose 1-diphosphate + ATP. Its pathway is amino-acid biosynthesis; L-histidine biosynthesis; L-histidine from 5-phospho-alpha-D-ribose 1-diphosphate: step 1/9. Its activity is regulated as follows. Feedback inhibited by histidine. In terms of biological role, catalyzes the condensation of ATP and 5-phosphoribose 1-diphosphate to form N'-(5'-phosphoribosyl)-ATP (PR-ATP). Has a crucial role in the pathway because the rate of histidine biosynthesis seems to be controlled primarily by regulation of HisG enzymatic activity. The chain is ATP phosphoribosyltransferase from Vibrio parahaemolyticus serotype O3:K6 (strain RIMD 2210633).